A 307-amino-acid polypeptide reads, in one-letter code: Ubiquitin recognition factor in ER-associated degradation protein 1 (307 aa).

Methionine 1 is subject to N-acetylmethionine. Phosphoserine is present on residues serine 129, serine 231, serine 245, serine 247, and serine 299. 2 disordered regions span residues 231–256 (SGNR…DIKR) and 288–307 (GRFV…GRKP).

The protein belongs to the UFD1 family. Heterodimer with NPLOC4, this heterodimer binds VCP and inhibits Golgi membrane fusion. Interacts with USP13. Interacts with ZFAND2B; probably through VCP. In terms of tissue distribution, found in adult heart, skeletal muscle and pancreas, and in fetal liver and kidney.

It is found in the nucleus. The protein resides in the cytoplasm. The protein localises to the cytosol. It functions in the pathway protein degradation; proteasomal ubiquitin-dependent pathway. Functionally, essential component of the ubiquitin-dependent proteolytic pathway which degrades ubiquitin fusion proteins. The ternary complex containing UFD1, VCP and NPLOC4 binds ubiquitinated proteins and is necessary for the export of misfolded proteins from the ER to the cytoplasm, where they are degraded by the proteasome. The NPLOC4-UFD1-VCP complex regulates spindle disassembly at the end of mitosis and is necessary for the formation of a closed nuclear envelope. It may be involved in the development of some ectoderm-derived structures. Acts as a negative regulator of type I interferon production via the complex formed with VCP and NPLOC4, which binds to RIGI and recruits RNF125 to promote ubiquitination and degradation of RIGI. The polypeptide is Ubiquitin recognition factor in ER-associated degradation protein 1 (Homo sapiens (Human)).